The following is an 859-amino-acid chain: Pre-mRNA-splicing factor SYF1 (859 aa).

HAT repeat units follow at residues 17 to 49, 52 to 84, 88 to 108, 123 to 157, 177 to 219, 238 to 271, 427 to 459, 461 to 482, 520 to 554, 599 to 633, 639 to 675, 685 to 718, 720 to 754, and 756 to 790; these read NIRNDEDVAFEYEIQKTPQNILTWKRYIEYWKE, RTDKQIRWLYERFCSQFVTDTSIWEDYIRWEST, VETSRIFWLFQRCLKSCVRDC, YDLAMIRHALASSLMKMEREMHRKVWDPVIKFVEE, DEAE…ERYL, RDNITIKSVYEKYLPQDENSGKYLPSSELPFELN, VYSEAILKIDPRKVGTPGSFGRLWCSYGDLYWR, NAISTARELWTQSLKVPYPYIE, ILLEKYKNGHRKIPAQTVLFNSLRIWSKYIDYLEA, YEVMESFQVYEKTIPLFPPEIQYELWIEYLEVATS, LSPEHIRFLFEKALKNLCSNGIDCKTIFIAYSVFEER, EILRRGAVIGTVSVSTHLESRLQLWRMCISKAES, LGPSVTRELYQECIQILPNSKAVEFVIKFSDFESS, and GETIRAREILAYGAKLLPPSRNTELWDSFEIFELK.

Belongs to the crooked-neck family. In terms of assembly, belongs to the NTC complex (or PRP19-associated complex), composed of at least CEF1, CLF1, ISY1, NTC20, SNT309, SYF1, SYF2, and PRP19. The NTC complex associates with the spliceosome after the release of the U1 and U4 snRNAs and forms the CWC spliceosome subcomplex (or CEF1-associated complex) reminiscent of a late-stage spliceosome composed also of the U2, U5 and U6 snRNAs and at least BUD13, BUD31, BRR2, CDC40, CUS1, CWC2, CWC15, CWC21, CWC22, CWC23, CWC24, CWC25, CWC27, ECM2, HSH155, IST3, LEA1, MSL1, PRP8, PRP9, PRP11, PRP21, PRP22, PRP45, PRP46, SLU7, SMB1, SMD1, SMD2, SMD3, SMX2, SMX3, SNU114, SPP2, RSE1 and YJU2. Interacts with CEF1, CLF1, ISY1, NTC20, PRP22, PRP46 and SYF2.

The protein localises to the nucleus. Functionally, involved in pre-mRNA splicing and cell cycle control. As a component of the NTC complex (or PRP19-associated complex), associates to the spliceosome to mediate conformational rearrangement or to stabilize the structure of the spliceosome after U4 snRNA dissociation, which leads to spliceosome maturation. The chain is Pre-mRNA-splicing factor SYF1 (SYF1) from Saccharomyces cerevisiae (strain ATCC 204508 / S288c) (Baker's yeast).